The sequence spans 721 residues: Glucans biosynthesis glucosyltransferase H (721 aa).

A run of 7 helical transmembrane segments spans residues 54 to 74, 85 to 105, 404 to 424, 458 to 478, 493 to 513, 548 to 568, and 569 to 589; these read LIMV…YQVL, VVLV…VSAL, GIGA…GILI, FAGT…LVLI, FGGV…MMVF, YALP…VSWP, and LLLW…VALL.

Belongs to the glycosyltransferase 2 family. OpgH subfamily.

The protein resides in the cell inner membrane. It participates in glycan metabolism; osmoregulated periplasmic glucan (OPG) biosynthesis. Its function is as follows. Involved in the biosynthesis of osmoregulated periplasmic glucans (OPGs). This chain is Glucans biosynthesis glucosyltransferase H, found in Rhodopseudomonas palustris (strain TIE-1).